The following is a 488-amino-acid chain: Probable 26S proteasome non-ATPase regulatory subunit 3 (488 aa).

Positions Met1–Ser20 are disordered. The PCI domain maps to Ser240–Asp421. Residues Phe452 to Phe488 form a disordered region. Positions Ser456–Ala481 are enriched in basic and acidic residues.

This sequence belongs to the proteasome subunit S3 family. The 26S proteasome is composed of a core protease, known as the 20S proteasome, capped at one or both ends by the 19S regulatory complex (RC). The RC is composed of at least 18 different subunits in two subcomplexes, the base and the lid, which form the portions proximal and distal to the 20S proteolytic core, respectively.

Its subcellular location is the nucleus. Acts as a regulatory subunit of the 26 proteasome which is involved in the ATP-dependent degradation of ubiquitinated proteins. This chain is Probable 26S proteasome non-ATPase regulatory subunit 3 (21D7), found in Nicotiana tabacum (Common tobacco).